The primary structure comprises 405 residues: Tryptophan synthase beta chain (405 aa).

Lysine 95 bears the N6-(pyridoxal phosphate)lysine mark.

Belongs to the TrpB family. In terms of assembly, tetramer of two alpha and two beta chains. It depends on pyridoxal 5'-phosphate as a cofactor.

The enzyme catalyses (1S,2R)-1-C-(indol-3-yl)glycerol 3-phosphate + L-serine = D-glyceraldehyde 3-phosphate + L-tryptophan + H2O. The protein operates within amino-acid biosynthesis; L-tryptophan biosynthesis; L-tryptophan from chorismate: step 5/5. The beta subunit is responsible for the synthesis of L-tryptophan from indole and L-serine. The chain is Tryptophan synthase beta chain (trpB) from Pseudomonas putida (Arthrobacter siderocapsulatus).